Reading from the N-terminus, the 217-residue chain is UPF0502 protein ETA_20480 (217 aa).

The interval 169 to 188 (GEVDESSRADGHHPDDHRGD) is disordered. Residues 173–188 (ESSRADGHHPDDHRGD) show a composition bias toward basic and acidic residues.

The protein belongs to the UPF0502 family.

The polypeptide is UPF0502 protein ETA_20480 (Erwinia tasmaniensis (strain DSM 17950 / CFBP 7177 / CIP 109463 / NCPPB 4357 / Et1/99)).